We begin with the raw amino-acid sequence, 255 residues long: F-box/SPRY domain-containing protein 1 (255 aa).

Residues 3–51 (DPVAALCNYNVLEVIFSYLELDDLSHCSQVCKSWYHFLNDENSDVWRWH) enclose the F-box domain. The B30.2/SPRY domain occupies 61 to 253 (LKSDLLSSVP…VSMVYLGTPL (193 aa)).

The protein belongs to the FBXO45/Fsn family. As to quaternary structure, component of an E3 ubiquitin ligase complex composed of hiw and Fsn.

It is found in the synapse. The protein operates within protein modification; protein ubiquitination. Its function is as follows. Required in the presynaptic motoneuron to down-regulate the levels of wnd and restrain synaptic terminal growth at the neuromuscular junction (NMJ). In Drosophila sechellia (Fruit fly), this protein is F-box/SPRY domain-containing protein 1.